The sequence spans 373 residues: S-adenosylmethionine:tRNA ribosyltransferase-isomerase (373 aa).

The protein belongs to the QueA family. In terms of assembly, monomer.

The protein resides in the cytoplasm. The catalysed reaction is 7-aminomethyl-7-carbaguanosine(34) in tRNA + S-adenosyl-L-methionine = epoxyqueuosine(34) in tRNA + adenine + L-methionine + 2 H(+). It participates in tRNA modification; tRNA-queuosine biosynthesis. Its function is as follows. Transfers and isomerizes the ribose moiety from AdoMet to the 7-aminomethyl group of 7-deazaguanine (preQ1-tRNA) to give epoxyqueuosine (oQ-tRNA). The sequence is that of S-adenosylmethionine:tRNA ribosyltransferase-isomerase from Caulobacter sp. (strain K31).